Consider the following 245-residue polypeptide: Tetraspanin-16 (245 aa).

Residues 1-13 (MAEIHTPYSSLKK) lie on the Cytoplasmic side of the membrane. A helical membrane pass occupies residues 14–34 (LLSLLNGFVAVSGIILVGLGI). Residues 35–37 (GGK) lie on the Extracellular side of the membrane. The helical transmembrane segment at 38 to 58 (CGGASLTNVLGLSSAYLLHVG) threads the bilayer. Asn-59 is a topological domain (cytoplasmic). The helical transmembrane segment at 60 to 80 (LCLVMGCITVLLGCAGWYGAT) threads the bilayer. Residues 81-94 (KESRGTLLFCILSM) are Extracellular-facing. Residues 95–115 (VIVLIMEVTAATVVLLFFPIV) form a helical membrane-spanning segment. At 116–245 (GDVALEHTFV…VAQAGLELLA (130 aa)) the chain is on the cytoplasmic side.

This sequence belongs to the tetraspanin (TM4SF) family. Broadly expressed in most human tissues and cell lines including neural and bone marrow derived tissues.

It is found in the membrane. This Homo sapiens (Human) protein is Tetraspanin-16 (TSPAN16).